The chain runs to 500 residues: Glycerol kinase (500 aa).

An ADP-binding site is contributed by threonine 11. The ATP site is built by threonine 11, threonine 12, and serine 13. Threonine 11 is a sn-glycerol 3-phosphate binding site. Arginine 15 lines the ADP pocket. Sn-glycerol 3-phosphate is bound by residues arginine 81, glutamate 82, tyrosine 133, and aspartate 242. Residues arginine 81, glutamate 82, tyrosine 133, aspartate 242, and glutamine 243 each contribute to the glycerol site. ADP contacts are provided by threonine 264 and glycine 307. ATP contacts are provided by threonine 264, glycine 307, glutamine 311, and glycine 411. Residue glycine 411 participates in ADP binding.

Belongs to the FGGY kinase family.

It catalyses the reaction glycerol + ATP = sn-glycerol 3-phosphate + ADP + H(+). The protein operates within polyol metabolism; glycerol degradation via glycerol kinase pathway; sn-glycerol 3-phosphate from glycerol: step 1/1. Inhibited by fructose 1,6-bisphosphate (FBP). Functionally, key enzyme in the regulation of glycerol uptake and metabolism. Catalyzes the phosphorylation of glycerol to yield sn-glycerol 3-phosphate. The sequence is that of Glycerol kinase from Rhodopseudomonas palustris (strain BisA53).